The sequence spans 488 residues: Putative BPI/LBP family protein At1g04970 (488 aa).

The N-terminal stretch at 1-24 is a signal peptide; the sequence is MDVGRCFLFLLLPSFFFLPSQTQS. Residues Asn-79, Asn-109, Asn-231, Asn-242, and Asn-341 are each glycosylated (N-linked (GlcNAc...) asparagine).

This sequence belongs to the BPI/LBP/Plunc superfamily. BPI/LBP (TC 1.C.40) family.

The polypeptide is Putative BPI/LBP family protein At1g04970 (Arabidopsis thaliana (Mouse-ear cress)).